The sequence spans 52 residues: Thiocillin (52 aa).

A propeptide spanning residues 1 to 38 (MSEIKKALNTLEIEDFDAIEMVDVDAMPENEALEIMGA) is cleaved from the precursor. The segment at residues 39–40 (SC) is a cross-link (thiazole-4-carboxylic acid (Ser-Cys)). The pyridine-2,5-dicarboxylic acid (Ser-Cys) (with S-48) cross-link spans 39–47 (SCTTCVCTC). The segment at residues 39–48 (SCTTCVCTCS) is a cross-link (pyridine-2,5-dicarboxylic acid (Ser-Ser) (with C-47)). (Z)-2,3-didehydrobutyrine is present on Thr42. Residues 42–43 (TC) constitute a cross-link (thiazole-4-carboxylic acid (Thr-Cys)). A 3-hydroxyvaline (Val); partial modification is found at Val44. Positions 44–45 (VC) form a cross-link, thiazole-4-carboxylic acid (Val-Cys). Thr46 is subject to O-methylthreonine; partial. A cross-link (thiazole-4-carboxylic acid (Thr-Cys)) is located at residues 46-47 (TC). The thiazole-4-carboxylic acid (Ser-Cys) cross-link spans 48-49 (SC). Residues 49 to 50 (CC) constitute a cross-link (thiazole-4-carboxylic acid (Cys-Cys)). Thr51 carries the (Z)-2,3-didehydrobutyrine modification. Thr52 bears the 1-amino-2-propanone; alternate mark. Thr52 carries the decarboxylated threonine; alternate modification.

The protein belongs to the thiocillin family. Maturation of thiazole and oxazole containing antibiotics involves the enzymatic condensation of a Cys, Ser or Thr with the alpha-carbonyl of the preceding amino acid to form a thioether or ether bond, then dehydration to form a double bond with the alpha-amino nitrogen. Thiazoline or oxazoline ring are dehydrogenated to form thiazole or oxazole rings. Post-translationally, maturation of pyridinyl containing antibiotics involves the cross-linking of a Ser and a Cys-Ser pair usually separated by 7 or 8 residues along the peptide chain. The Ser residues are dehydrated to didehydroalanines, then bonded between their beta carbons. The alpha carbonyl of the Cys condenses with alpha carbon of the first Ser to form a pyridinyl ring. The ring may be multiply dehydrogenated to form a pyridine ring with loss of the amino nitrogen of the first Ser. In terms of processing, the 8 possible modification isomers, differing in the presence of modifications at three positions, have been characterized in PubMed:19196969. Val-44 is modified to 3-hydroxyvaline in forms thiocillin I, thiocillin II, YM-266183, and YM-266184. Thr-46 is modified to O-methylthreonine in forms thiocillin II, thiocillin III, thiocillin IV, and YM-266184. Thr-52 is decarboxylated to (R)-1-aminopropan-2-ol in forms micrococcin P1, thiocillin I, thiocillin II, and thiocillin III. Thr-52 is decarboxylated and oxidized to 1-amino-2-propanone in forms micrococcin P2, YM-266183, YM-266184. and thiocillin IV. The structure of 2,3-didehydrobutyrines is not discussed in PubMed:19196969. However, in Fig. 3 the residues are diagrammed as Z-isomers.

It is found in the secreted. Functionally, has bacteriocidal activity against Gram-positive bacteria, but not against Gram-negative bacteria. Inhibits bacterial protein biosynthesis by acting on the elongation factor Tu (EF-Tu). This chain is Thiocillin, found in Bacillus cereus (strain ATCC 14579 / DSM 31 / CCUG 7414 / JCM 2152 / NBRC 15305 / NCIMB 9373 / NCTC 2599 / NRRL B-3711).